Consider the following 99-residue polypeptide: Small ribosomal subunit protein bS21 (99 aa).

Positions 60 to 99 are disordered; sequence KKLQREGLLPMKPKPVFGAGPGGDRRGPGAGPGAGPRPAR.

It belongs to the bacterial ribosomal protein bS21 family.

In Rhodopseudomonas palustris (strain BisA53), this protein is Small ribosomal subunit protein bS21.